A 593-amino-acid polypeptide reads, in one-letter code: Glucose-6-phosphate 1-dehydrogenase, chloroplastic (593 aa).

NADP(+) contacts are provided by residues 116-123 (GASGDLAK) and Arg150. Residues Cys168 and Cys176 are joined by a disulfide bond. Position 253 (Lys253) interacts with NADP(+). Residues Lys253, 283–287 (HYLGK), Glu321, and Asp340 each bind D-glucose 6-phosphate. The active-site Proton acceptor is the His345. Lys438 serves as a coordination point for NADP(+). 2 residues coordinate D-glucose 6-phosphate: Lys441 and Arg446. Arg451 and Arg480 together coordinate NADP(+). Residue Gln482 participates in D-glucose 6-phosphate binding. NADP(+)-binding positions include 488–490 (YLK) and Arg573.

It belongs to the glucose-6-phosphate dehydrogenase family. In terms of assembly, homodimer.

Its subcellular location is the plastid. It localises to the chloroplast. The enzyme catalyses D-glucose 6-phosphate + NADP(+) = 6-phospho-D-glucono-1,5-lactone + NADPH + H(+). The protein operates within carbohydrate degradation; pentose phosphate pathway; D-ribulose 5-phosphate from D-glucose 6-phosphate (oxidative stage): step 1/3. Its activity is regulated as follows. Regulated by metabolites. Post-translationally inactivated by cysteine-mediated redox modification via the ferredoxin-thioredoxin system in the light and this avoids futile cycles with photosynthetic CO2 fixation. Catalyzes the rate-limiting step of the oxidative pentose-phosphate pathway, which represents a route for the dissimilation of carbohydrates besides glycolysis. The main function of this enzyme is to provide reducing power (NADPH) and pentose phosphates for fatty acid and nucleic acid synthesis which are involved in membrane synthesis and cell division. This Nicotiana tabacum (Common tobacco) protein is Glucose-6-phosphate 1-dehydrogenase, chloroplastic.